Here is a 908-residue protein sequence, read N- to C-terminus: Zinc finger CCCH domain-containing protein 41 (908 aa).

A compositionally biased stretch (polar residues) spans 1 to 13 (MELSVSSPKQSVL). The segment at 1–124 (MELSVSSPKQ…GRGNYGSWAQ (124 aa)) is disordered. A compositionally biased stretch (acidic residues) spans 20 to 34 (SDPEEEHEISEEEDD). 2 stretches are compositionally biased toward polar residues: residues 48–59 (SQSLEQDSSDQA) and 90–105 (GQRVQFDNQRMRSNPM). The C3H1-type zinc-finger motif lies at 200 to 228 (GIPRQRCRDFEERGFCLRGDMCPMEHGMN). A disordered region spans residues 333–375 (NVAPLDDSNQDAAENGCGIRDSRSTSQSVWGRMKGSNSQANSK). Over residues 356-373 (STSQSVWGRMKGSNSQAN) the composition is skewed to polar residues. The RRM domain occupies 438 to 510 (RTLFVNYVPH…RFIKLWWANR (73 aa)). Disordered stretches follow at residues 558 to 590 (PTFQTGGAPSSSEQPKPVVVTTSGPKVTPLQQK), 629 to 695 (VVKR…KQRP), and 807 to 908 (RESN…QIHQ). Residues 559 to 588 (TFQTGGAPSSSEQPKPVVVTTSGPKVTPLQ) show a composition bias toward polar residues. The stretch at 587–630 (LQQKKADTLERLKETLRKKQEMLEQKRNEYRKKLATLEKQGTVV) forms a coiled coil. Residues 630-647 (VKREEADEPDAKRVKLDT) show a composition bias toward basic and acidic residues. Phosphoserine is present on serine 657. Over residues 677–688 (AKLSTETPSPDS) the composition is skewed to polar residues. Low complexity predominate over residues 807–828 (RESNNNNNNSNSLSVSRDNLSS). Residues 846–863 (KTSSTEEPENTNVSGDND) show a composition bias toward polar residues. Residues 865-886 (TLDKQETKESDNDNNKSNHESI) are compositionally biased toward basic and acidic residues. Over residues 898–908 (TDEEQSEQIHQ) the composition is skewed to acidic residues.

In Arabidopsis thaliana (Mouse-ear cress), this protein is Zinc finger CCCH domain-containing protein 41.